We begin with the raw amino-acid sequence, 343 residues long: Olfactory receptor 1E3 (343 aa).

Over 1 to 28 (MMKKNQTMISEFLLLGLPIQPEQQNLFY) the chain is Extracellular. N-linked (GlcNAc...) asparagine glycosylation occurs at asparagine 5. A helical membrane pass occupies residues 29-49 (ALFLAVYLTTLLGNLLVIVLI). Residues 50 to 107 (RLDSHLHMPMYLCLSNLSFSDLCFSSVTMPKLLQNMQSQNPSIPFADCLAQMYFHLFY) are Cytoplasmic-facing. A disulfide bridge connects residues cysteine 97 and cysteine 179. The chain crosses the membrane as a helical span at residues 108 to 128 (GVLESFLLVVMAYHCYVAICF). The Extracellular segment spans residues 129-141 (PLHYTTIMSPKCC). The chain crosses the membrane as a helical span at residues 142-162 (LGLLTLSWLLTTAHATLHTLL). Residues 163–195 (MARLSFCAENVIPHFFCDTSTLLKLACSNTQVN) lie on the Cytoplasmic side of the membrane. Residues 196–216 (GWVMFFMGGLILVIPFLLLIM) form a helical membrane-spanning segment. Residues 217–242 (SCARIVSTILRVPSTGGIQKAFSTCG) lie on the Extracellular side of the membrane. The helical transmembrane segment at 243-263 (PHLSVVSLFYGTIIGLYLCPL) threads the bilayer. The Cytoplasmic segment spans residues 264 to 271 (TNHNTVKD). The helical transmembrane segment at 272 to 292 (TVMAVMYTGVTHMLNPFIYSL) threads the bilayer. Residues 293-310 (RNRDMRGNPGQSLQHKEN) lie on the Extracellular side of the membrane. Residues 311-331 (FFVFKIVIVGILPLLNLVGVV) form a helical membrane-spanning segment. At 332-343 (KLIMKYHSKSVA) the chain is on the cytoplasmic side.

The protein belongs to the G-protein coupled receptor 1 family.

The protein localises to the cell membrane. In terms of biological role, odorant receptor. The protein is Olfactory receptor 1E3 (OR1E3) of Homo sapiens (Human).